The chain runs to 155 residues: Ribosomal RNA large subunit methyltransferase H (155 aa).

Residues Leu-72, Gly-103, and 122–127 (LSTMTL) contribute to the S-adenosyl-L-methionine site.

This sequence belongs to the RNA methyltransferase RlmH family. Homodimer.

The protein localises to the cytoplasm. The enzyme catalyses pseudouridine(1915) in 23S rRNA + S-adenosyl-L-methionine = N(3)-methylpseudouridine(1915) in 23S rRNA + S-adenosyl-L-homocysteine + H(+). Specifically methylates the pseudouridine at position 1915 (m3Psi1915) in 23S rRNA. This is Ribosomal RNA large subunit methyltransferase H from Nitrosomonas eutropha (strain DSM 101675 / C91 / Nm57).